Consider the following 92-residue polypeptide: MKTLLLTLVVVTIVCLDLGDGLICYVDSKTSRTCPPGENVCFTETWCDARCSLLGKRVDLGCAATCPTAKPGVDITCCSTDKCNPFPTQKHR.

The first 21 residues, 1-21, serve as a signal peptide directing secretion; the sequence is MKTLLLTLVVVTIVCLDLGDG. Intrachain disulfides connect Cys-24-Cys-41, Cys-34-Cys-62, Cys-47-Cys-51, Cys-66-Cys-77, and Cys-78-Cys-83.

This sequence belongs to the three-finger toxin family. Long-chain subfamily. Type II alpha-neurotoxin sub-subfamily. Expressed by the venom gland.

It is found in the secreted. Functionally, binds with high affinity to muscular (alpha-1/CHRNA1) and neuronal (alpha-7/CHRNA7) nicotinic acetylcholine receptor (nAChR) and inhibits acetylcholine from binding to the receptor, thereby impairing neuromuscular and neuronal transmission. This Austrelaps superbus (Lowland copperhead snake) protein is Alpha-elapitoxin-As2a.